The chain runs to 240 residues: MRIDVLTLFPEMFSIFNHSIIGRAIGKEILKINTVNIRDYTIDKHKKVDDYPYGGGAGMVMAAQPIVDSIKTVKKENKGKVIFLGPKGKTFNQNLAKELAKEEELIFLCGHYEGIDERAYEYIDMEISLGDFVLTGGEMACIPIVDSICRLVDGVLKSSESYEDESFYNGLLEYPQYTRPPIYEGKAVPDVLLSGHHENIKKWRKAKSLMITKKVRPDLLKKYRLTEEDKKILKDFNKKL.

S-adenosyl-L-methionine is bound by residues glycine 110 and 129-134; that span reads LGDFVL.

The protein belongs to the RNA methyltransferase TrmD family. As to quaternary structure, homodimer.

The protein localises to the cytoplasm. The enzyme catalyses guanosine(37) in tRNA + S-adenosyl-L-methionine = N(1)-methylguanosine(37) in tRNA + S-adenosyl-L-homocysteine + H(+). Specifically methylates guanosine-37 in various tRNAs. This chain is tRNA (guanine-N(1)-)-methyltransferase, found in Clostridium botulinum (strain 657 / Type Ba4).